Consider the following 318-residue polypeptide: L-lactate dehydrogenase (318 aa).

NAD(+) contacts are provided by residues Val17, Asp38, Lys43, Tyr69, and 83 to 84 (GA). Substrate contacts are provided by Gln86 and Arg92. Residues Ser105, 122 to 124 (ATN), and Ser147 each bind NAD(+). 124–127 (NPVD) contributes to the substrate binding site. 152 to 155 (DTAR) contacts substrate. Positions 157 and 172 each coordinate beta-D-fructose 1,6-bisphosphate. His179 acts as the Proton acceptor in catalysis. Tyr223 carries the post-translational modification Phosphotyrosine. A substrate-binding site is contributed by Thr232.

Belongs to the LDH/MDH superfamily. LDH family. In terms of assembly, homotetramer.

It localises to the cytoplasm. It carries out the reaction (S)-lactate + NAD(+) = pyruvate + NADH + H(+). It functions in the pathway fermentation; pyruvate fermentation to lactate; (S)-lactate from pyruvate: step 1/1. Allosterically activated by fructose 1,6-bisphosphate (FBP). Its function is as follows. Catalyzes the conversion of lactate to pyruvate. The chain is L-lactate dehydrogenase from Staphylococcus saprophyticus subsp. saprophyticus (strain ATCC 15305 / DSM 20229 / NCIMB 8711 / NCTC 7292 / S-41).